Here is a 439-residue protein sequence, read N- to C-terminus: GTPase Der (439 aa).

EngA-type G domains follow at residues 2 to 167 (PTVL…ESKG) and 182 to 358 (IRVS…KSLH). Residues 8–15 (GKSNVGKS), 55–59 (DTGGI), 118–121 (NKSE), 188–195 (GRPNAGKS), 235–239 (DTAGL), and 301–304 (NKID) contribute to the GTP site. One can recognise a KH-like domain in the interval 359-439 (YRVQTSAVNS…PIFLKFKSRH (81 aa)).

It belongs to the TRAFAC class TrmE-Era-EngA-EngB-Septin-like GTPase superfamily. EngA (Der) GTPase family. Associates with the 50S ribosomal subunit.

Functionally, GTPase that plays an essential role in the late steps of ribosome biogenesis. The protein is GTPase Der of Thermosipho africanus (strain TCF52B).